The primary structure comprises 425 residues: Serine--tRNA ligase (425 aa).

232 to 234 (TSE) lines the L-serine pocket. ATP-binding positions include 263 to 265 (RRE) and Val-279. Glu-286 lines the L-serine pocket. 350–353 (EVVS) is an ATP binding site. Thr-387 contacts L-serine.

The protein belongs to the class-II aminoacyl-tRNA synthetase family. Type-1 seryl-tRNA synthetase subfamily. In terms of assembly, homodimer. The tRNA molecule binds across the dimer.

Its subcellular location is the cytoplasm. The catalysed reaction is tRNA(Ser) + L-serine + ATP = L-seryl-tRNA(Ser) + AMP + diphosphate + H(+). It carries out the reaction tRNA(Sec) + L-serine + ATP = L-seryl-tRNA(Sec) + AMP + diphosphate + H(+). The protein operates within aminoacyl-tRNA biosynthesis; selenocysteinyl-tRNA(Sec) biosynthesis; L-seryl-tRNA(Sec) from L-serine and tRNA(Sec): step 1/1. Catalyzes the attachment of serine to tRNA(Ser). Is also able to aminoacylate tRNA(Sec) with serine, to form the misacylated tRNA L-seryl-tRNA(Sec), which will be further converted into selenocysteinyl-tRNA(Sec). The sequence is that of Serine--tRNA ligase from Methanoregula boonei (strain DSM 21154 / JCM 14090 / 6A8).